The primary structure comprises 141 residues: Large ribosomal subunit protein uL11 (141 aa).

It belongs to the universal ribosomal protein uL11 family. Part of the ribosomal stalk of the 50S ribosomal subunit. Interacts with L10 and the large rRNA to form the base of the stalk. L10 forms an elongated spine to which L12 dimers bind in a sequential fashion forming a multimeric L10(L12)X complex. In terms of processing, one or more lysine residues are methylated.

Functionally, forms part of the ribosomal stalk which helps the ribosome interact with GTP-bound translation factors. This Levilactobacillus brevis (strain ATCC 367 / BCRC 12310 / CIP 105137 / JCM 1170 / LMG 11437 / NCIMB 947 / NCTC 947) (Lactobacillus brevis) protein is Large ribosomal subunit protein uL11.